Here is a 588-residue protein sequence, read N- to C-terminus: WD repeat-containing protein DDB_G0349043 (588 aa).

The disordered stretch occupies residues 1 to 32; the sequence is MPLDNKVQLNENGKEVNNNNNNDEDLKIQDNH. The LisH domain occupies 40–72; the sequence is NRSELVRLLIQSLNSLGYDKSAEFLEKDSGISL. A CTLH domain is found at 73 to 129; it reads QSKEINQFSECVVSGDWNKVEELLPFLKLNEFDTNNVKFLVYSQKFLEYLENHKIKE. 3 WD repeats span residues 244 to 283, 294 to 333, and 336 to 375; these read KHRD…LDQP, GHTK…LLKT, and KHSD…LTNS. The interval 376–403 is disordered; that stretch reads NNNNNNHNNNNSNINGNSINGSNNNGNN. 4 WD repeats span residues 413–452, 455–494, 499–539, and 542–582; these read WACA…TPEV, METD…IVQK, KQGR…LLET, and RHSG…NSFI.

The polypeptide is WD repeat-containing protein DDB_G0349043 (Dictyostelium discoideum (Social amoeba)).